The sequence spans 468 residues: Abscisic acid 8'-hydroxylase 4 (468 aa).

Residues 4 to 24 (IWFLVVPILILCLLLVRVIVS) traverse the membrane as a helical segment. Cys-415 is a binding site for heme.

It belongs to the cytochrome P450 family. Requires heme as cofactor. In terms of tissue distribution, mainly expressed in flowers. Lower expression in siliques, rosette leaves, roots and stems. Not expressed in dry seeds. Expressed in silique envelopes, but not in embryo or endosperm during the seed development.

It is found in the membrane. It carries out the reaction 2-cis-(+)-abscisate + reduced [NADPH--hemoprotein reductase] + O2 = (+)-8'-hydroxyabscisate + oxidized [NADPH--hemoprotein reductase] + H2O + H(+). It functions in the pathway plant hormone degradation; abscisic acid degradation. Involved in the oxidative degradation of abscisic acid, but not in the isomerization of the produced 8'-hydroxyabscisic acid (8'-OH-ABA) to (-)-phaseic acid (PA). In Arabidopsis thaliana (Mouse-ear cress), this protein is Abscisic acid 8'-hydroxylase 4 (CYP707A4).